Here is a 955-residue protein sequence, read N- to C-terminus: RNA polymerase-associated protein RapA (955 aa).

One can recognise a Helicase ATP-binding domain in the interval 163 to 333 (EVGHRYAPRV…FARLRLLDPE (171 aa)). 176–183 (DEVGLGKT) provides a ligand contact to ATP. The short motif at 279–282 (DEAH) is the DEAH box element. The 165-residue stretch at 478 to 642 (RVDWLLELLL…AVRDELFELL (165 aa)) folds into the Helicase C-terminal domain.

Belongs to the SNF2/RAD54 helicase family. RapA subfamily. Interacts with the RNAP. Has a higher affinity for the core RNAP than for the holoenzyme. Its ATPase activity is stimulated by binding to RNAP.

In terms of biological role, transcription regulator that activates transcription by stimulating RNA polymerase (RNAP) recycling in case of stress conditions such as supercoiled DNA or high salt concentrations. Probably acts by releasing the RNAP, when it is trapped or immobilized on tightly supercoiled DNA. Does not activate transcription on linear DNA. Probably not involved in DNA repair. This chain is RNA polymerase-associated protein RapA, found in Aeromonas salmonicida (strain A449).